Reading from the N-terminus, the 460-residue chain is Elongation factor 1-alpha (460 aa).

Glycine 2 carries the post-translational modification N,N,N-trimethylglycine. Lysine 3 is modified (N6,N6-dimethyllysine; alternate). Lysine 3 carries the N6-methyllysine; alternate modification. The tr-type G domain maps to 6–241 (KAHINVVVIG…DAIEQPKRPT (236 aa)). A G1 region spans residues 15 to 22 (GHVDSGKS). Residue 15–22 (GHVDSGKS) coordinates GTP. Lysine 31 is subject to N6-methyllysine. Residues 71-75 (GITID) are G2. Lysine 80 carries the post-translational modification N6,N6,N6-trimethyllysine. Positions 92–95 (DAPG) are G3. Residues 92–96 (DAPGH) and 154–157 (NKMD) each bind GTP. Positions 154-157 (NKMD) are G4. Residues 193–195 (SGF) are G5. Residue lysine 317 is modified to N6,N6-dimethyllysine; alternate. Residue lysine 317 is modified to N6-methyllysine; alternate. The residue at position 391 (lysine 391) is an N6-methyllysine.

The protein belongs to the TRAFAC class translation factor GTPase superfamily. Classic translation factor GTPase family. EF-Tu/EF-1A subfamily.

Its subcellular location is the cytoplasm. This protein promotes the GTP-dependent binding of aminoacyl-tRNA to the A-site of ribosomes during protein biosynthesis. This Sordaria macrospora protein is Elongation factor 1-alpha (TEF).